The chain runs to 147 residues: Hemoglobin subunit gamma (147 aa).

Residues 3 to 147 (HFTVEEKAVI…VAIALAHKYH (145 aa)) enclose the Globin domain. Heme b contacts are provided by His64 and His93.

The protein belongs to the globin family. As to quaternary structure, heterotetramer of two alpha chains and two gamma chains in fetal hemoglobin (Hb F). In terms of tissue distribution, red blood cells.

In terms of biological role, gamma chains make up the fetal hemoglobin F, in combination with alpha chains. The chain is Hemoglobin subunit gamma (HBG) from Cheirogaleus medius (Fat-tailed dwarf lemur).